Reading from the N-terminus, the 196-residue chain is Probable malonic semialdehyde reductase RutE (196 aa).

The protein belongs to the nitroreductase family. HadB/RutE subfamily. FMN is required as a cofactor.

The catalysed reaction is 3-hydroxypropanoate + NADP(+) = 3-oxopropanoate + NADPH + H(+). Functionally, may reduce toxic product malonic semialdehyde to 3-hydroxypropionic acid, which is excreted. This is Probable malonic semialdehyde reductase RutE from Shigella sonnei (strain Ss046).